The chain runs to 140 residues: 6,7-dimethyl-8-ribityllumazine synthase (140 aa).

5-amino-6-(D-ribitylamino)uracil is bound by residues phenylalanine 11, alanine 42–glutamate 44, and valine 66–isoleucine 68. Glutamate 71–threonine 72 is a (2S)-2-hydroxy-3-oxobutyl phosphate binding site. Histidine 74 functions as the Proton donor in the catalytic mechanism. Position 98 (asparagine 98) interacts with 5-amino-6-(D-ribitylamino)uracil. Arginine 112 serves as a coordination point for (2S)-2-hydroxy-3-oxobutyl phosphate.

Belongs to the DMRL synthase family.

It carries out the reaction (2S)-2-hydroxy-3-oxobutyl phosphate + 5-amino-6-(D-ribitylamino)uracil = 6,7-dimethyl-8-(1-D-ribityl)lumazine + phosphate + 2 H2O + H(+). It functions in the pathway cofactor biosynthesis; riboflavin biosynthesis; riboflavin from 2-hydroxy-3-oxobutyl phosphate and 5-amino-6-(D-ribitylamino)uracil: step 1/2. In terms of biological role, catalyzes the formation of 6,7-dimethyl-8-ribityllumazine by condensation of 5-amino-6-(D-ribitylamino)uracil with 3,4-dihydroxy-2-butanone 4-phosphate. This is the penultimate step in the biosynthesis of riboflavin. The chain is 6,7-dimethyl-8-ribityllumazine synthase from Erythrobacter litoralis (strain HTCC2594).